We begin with the raw amino-acid sequence, 890 residues long: Alanine--tRNA ligase (890 aa).

Residues H573, H577, C676, and H680 each contribute to the Zn(2+) site.

Belongs to the class-II aminoacyl-tRNA synthetase family. It depends on Zn(2+) as a cofactor.

It localises to the cytoplasm. It catalyses the reaction tRNA(Ala) + L-alanine + ATP = L-alanyl-tRNA(Ala) + AMP + diphosphate. In terms of biological role, catalyzes the attachment of alanine to tRNA(Ala) in a two-step reaction: alanine is first activated by ATP to form Ala-AMP and then transferred to the acceptor end of tRNA(Ala). Also edits incorrectly charged Ser-tRNA(Ala) and Gly-tRNA(Ala) via its editing domain. The protein is Alanine--tRNA ligase of Corynebacterium efficiens (strain DSM 44549 / YS-314 / AJ 12310 / JCM 11189 / NBRC 100395).